The sequence spans 190 residues: UPF0301 protein Rpic_0619 (190 aa).

Belongs to the UPF0301 (AlgH) family.

The sequence is that of UPF0301 protein Rpic_0619 from Ralstonia pickettii (strain 12J).